Here is a 2012-residue protein sequence, read N- to C-terminus: Cell adhesion molecule DSCAM (2012 aa).

The N-terminal stretch at 1 to 17 (MWILALSLFQSFANVFS) is a signal peptide. Residues 18 to 1595 (EDLHSSLYFV…GLTTNEGLKM (1578 aa)) are Extracellular-facing. 2 N-linked (GlcNAc...) asparagine glycosylation sites follow: Asn28 and Asn78. 9 consecutive Ig-like C2-type domains span residues 39 to 129 (TTGT…YTVR), 125 to 216 (PYTV…ARLF), 225 to 305 (PSIL…AKVI), 313 to 401 (PLKA…VQVV), 407 to 500 (PKII…ARIN), 504 to 592 (PASI…VHVT), 596 to 685 (PPFI…SQLI), 690 to 783 (PKFV…MYLT), and 787 to 883 (PAMI…LTVQ). 5 disulfides stabilise this stretch: Cys46-Cys102, Cys145-Cys197, Cys246-Cys293, Cys335-Cys385, and Cys428-Cys484. Residues Asn470, Asn487, Asn512, Asn556, Asn658, Asn666, Asn710, Asn748, and Asn795 are each glycosylated (N-linked (GlcNAc...) asparagine). Disulfide bonds link Cys525–Cys575 and Cys617–Cys669. Cys711 and Cys766 are oxidised to a cystine. An intrachain disulfide couples Cys809 to Cys865. Fibronectin type-III domains lie at 885-982 (PPDP…ADEA), 987-1086 (PPQE…TLED), 1091-1187 (PPEN…TKED), and 1191-1285 (PPAG…AKAP). N-linked (GlcNAc...) asparagine glycosylation occurs at Asn924. 5 N-linked (GlcNAc...) asparagine glycosylation sites follow: Asn1142, Asn1160, Asn1250, Asn1271, and Asn1341. The Ig-like C2-type 10 domain maps to 1285–1377 (PARILTFSGT…DEIILNLQVQ (93 aa)). Cys1307 and Cys1359 are joined by a disulfide. Fibronectin type-III domains lie at 1379 to 1473 (PPDQ…TLGK) and 1474 to 1575 (EPQF…TIPP). A glycan (N-linked (GlcNAc...) asparagine) is linked at Asn1488. The chain crosses the membrane as a helical span at residues 1596 to 1616 (LVTISCILVGVLLLFVLLLVV). Topologically, residues 1617–2012 (RRRRREQRLK…NPYAKSYTLV (396 aa)) are cytoplasmic. A required for netrin-mediated axon repulsion of neuronal growth cones region spans residues 1617 to 2012 (RRRRREQRLK…NPYAKSYTLV (396 aa)). 3 disordered regions span residues 1718–1810 (LVDV…ASST), 1855–1883 (TDSL…DGGR), and 1971–2012 (LPQR…YTLV). The span at 1799 to 1809 (SSMVSTESASS) shows a compositional bias: low complexity. Residues 1855–1865 (TDSLTSSTPSE) are compositionally biased toward polar residues.

As to quaternary structure, homodimer; mediates homophilic interactions to promote cell adhesion. Interacts with DCC; the interaction is abolished in response to NTN1. Interacts (via extracellular domain) with NTN1. Interacts (via extracellular domain) with UNC5C (via Ig-like C2-type domain). Interacts with PTK2. Interacts with FYN. Post-translationally, phosphorylated at tyrosine residues. Phosphorylation is enhanced by NTN1. Primarily expressed in brain.

The protein localises to the secreted. The protein resides in the cell membrane. It localises to the cell projection. It is found in the axon. Its subcellular location is the dendrite. The protein localises to the growth cone. The protein resides in the synapse. Cell adhesion molecule that plays a role in neuronal self-avoidance. Promotes repulsion between specific neuronal processes of either the same cell or the same subtype of cells. Mediates within retinal amacrine and ganglion cell subtypes both isoneuronal self-avoidance for creating an orderly dendritic arborization and heteroneuronal self-avoidance to maintain the mosaic spacing between amacrine and ganglion cell bodies. Receptor for netrin required for axon guidance independently of and in collaboration with the receptor DCC. Might also collaborate with UNC5C in NTN1-mediated axon repulsion independently of DCC. In spinal cord development plays a role in guiding commissural axons projection and pathfinding across the ventral midline to reach the floor plate upon ligand binding. Mediates intracellular signaling by stimulating the activation of MAPK8 and MAP kinase p38. Adhesion molecule that promotes lamina-specific synaptic connections in the retina: expressed in specific subsets of interneurons and retinal ganglion cells (RGCs) and promotes synaptic connectivity via homophilic interactions. This Homo sapiens (Human) protein is Cell adhesion molecule DSCAM (DSCAM).